The primary structure comprises 517 residues: Sphingolipid C9-methyltransferase A (517 aa).

The next 2 membrane-spanning stretches (helical) occupy residues 58–78 (LLILLLVVIPWYTARQIGGGL) and 80–100 (TTIFFAIFTTIPILMAFWSIA). S-adenosyl-L-methionine is bound by residues 223–224 (YT), 286–291 (TLGRNQ), and 316–317 (YR). An N-linked (GlcNAc...) asparagine glycan is attached at N290. N478 carries an N-linked (GlcNAc...) asparagine glycan.

Belongs to the CFA/CMAS family.

Its subcellular location is the membrane. The enzyme catalyses a (4E,8E)-4-sphinga-4,8-dienine ceramide + S-adenosyl-L-methionine = a 9-methyl-(4E,8E)-sphinga-4,8-dienine ceramide + S-adenosyl-L-homocysteine + H(+). It participates in lipid metabolism; sphingolipid metabolism. Its function is as follows. Catalyzes methylation of the sphingoid base component of glucosylceramides (GluCers) at the C9-position. Sphingolipid C9-methylation requires 4,8-desaturated ceramides as substrates. Glucosylceramides play important roles in growth, differentiation and pathogenicity. The methyl group at the C9-position distinguishes fungal glucosylceramides from those of plants and animals and may thus play a role in host-pathogen interactions enabling the host to recognize the fungal attack and initiate specific defense responses. The sequence is that of Sphingolipid C9-methyltransferase A from Emericella nidulans (strain FGSC A4 / ATCC 38163 / CBS 112.46 / NRRL 194 / M139) (Aspergillus nidulans).